The primary structure comprises 651 residues: MNHQEVADRVLNAIGKNNIQAAAHCATRLRLVIKDESKIDQQALDDDADVKGTFETNGQYQIIIGPGDVDKVYDALIVKTGLKEVTPDDIKAVAAAGQNKNPLMDFLKVLSDIFIPIVPALVAGGLLMALNNVLTAEHLFMAKSVVEVYPGLKGIAEMINAMASAPFTFLPILLGFSATKRFGGNPYLGATMGMIMVLPSLVNGYSVATTMAAGKMVYWNVFGLHVAQAGYQGQVLPVLGVAFILATLEKFFHKHIKGAFDFTFTPMFAIVITGFLTFTIVGPVLRTVSDALTNGLVGLYNSTGWIGMGIFGLLYSAIVITGLHQTFPAIETQLLANVAKTGGSFIFPVASMANIGQGAATLAIFFATKSQKQKALTSSAGVSALLGITEPAIFGVNLKMKFPFVFAAIASGIASAFLGLFHVLSVAMGPASVIGFISIASKSIPAFMLSAVISFVVAFIPTFIYAKRTLGDDRDQVKSPAPTSTVINVNDEIISAPVTGASESLKQVNDQVFSAEIMGKGAAIVPSSDQVVAPADGVITVTYDSHHAYGIKTTAGAEILIHLGLDTVNLNGEHFTTNVQKGDTVHQGDLLGTFDIAALKAANYDPTVMLIVTNTANYANVERLKVTNVQAGEQLVALTAPAASSVAATTV.

In terms of domain architecture, PTS EIIB type-1 spans 3–86 (HQEVADRVLN…IVKTGLKEVT (84 aa)). Cys25 functions as the Phosphocysteine intermediate; for EIIB activity in the catalytic mechanism. Helical transmembrane passes span 109 to 129 (VLSD…LLMA), 158 to 178 (MINA…GFSA), 182 to 202 (FGGN…PSLV), 204 to 224 (GYSV…VFGL), 226 to 246 (VAQA…FILA), 264 to 284 (FTPM…VGPV), 303 to 323 (TGWI…ITGL), 345 to 365 (FIFP…LAIF), 404 to 424 (FVFA…FHVL), and 444 to 464 (IPAF…PTFI). The PTS EIIC type-1 domain maps to 121–481 (LVAGGLLMAL…DDRDQVKSPA (361 aa)). The region spanning 510-614 (DQVFSAEIMG…DPTVMLIVTN (105 aa)) is the PTS EIIA type-1 domain. His562 (tele-phosphohistidine intermediate; for EIIA activity) is an active-site residue.

The protein localises to the cell membrane. It catalyses the reaction N(pros)-phospho-L-histidyl-[protein](out) + sucrose = sucrose 6(G)-phosphate(in) + L-histidyl-[protein]. Functionally, the phosphoenolpyruvate-dependent sugar phosphotransferase system (sugar PTS), a major carbohydrate active transport system, catalyzes the phosphorylation of incoming sugar substrates concomitantly with their translocation across the cell membrane. This system is involved in sucrose transport. In Pediococcus pentosaceus, this protein is PTS system sucrose-specific EIIBCA component (scrA).